Here is a 420-residue protein sequence, read N- to C-terminus: Putative FBD-associated F-box protein At1g78730 (420 aa).

Residues 21 to 71 (LDWLRKLPDSLLCQVFLNLPTKDVVKTSVLSSTWGNIWRSVPGLDLGYGDF) enclose the F-box domain. Positions 341-390 (ISILPGPQCNLPALEFVDILKPMVEKETELKLMSYFLEKSTILKKLTLRL) constitute an FBD domain.

In Arabidopsis thaliana (Mouse-ear cress), this protein is Putative FBD-associated F-box protein At1g78730.